A 126-amino-acid polypeptide reads, in one-letter code: Histone H2B type 1-D (126 aa).

A compositionally biased stretch (low complexity) spans 1–12 (MPEPTKSAPAPK). The interval 1-36 (MPEPTKSAPAPKKGSKKAVTKAQKKDGKKRKRSRKE) is disordered. Pro-2 bears the N-acetylproline mark. Glu-3 is subject to ADP-ribosyl glutamic acid. Lys-6 bears the N6-(2-hydroxyisobutyryl)lysine; alternate mark. Lys-6 carries the N6-(beta-hydroxybutyryl)lysine; alternate modification. An N6-acetyllysine; alternate modification is found at Lys-6. Lys-6 is modified (N6-butyryllysine; alternate). Position 6 is an N6-crotonyllysine; alternate (Lys-6). Lys-6 carries the N6-lactoyllysine; alternate modification. A Glycyl lysine isopeptide (Lys-Gly) (interchain with G-Cter in SUMO2); alternate cross-link involves residue Lys-6. Position 7 is an ADP-ribosylserine (Ser-7). Lys-12 bears the N6-(beta-hydroxybutyryl)lysine; alternate mark. 2 positions are modified to N6-acetyllysine; alternate: Lys-12 and Lys-13. 2 positions are modified to N6-crotonyllysine; alternate: Lys-12 and Lys-13. Lys-12 carries the N6-lactoyllysine; alternate modification. Lys-13 bears the N6-(2-hydroxyisobutyryl)lysine; alternate mark. Position 15 is a phosphoserine; by STK4/MST1 (Ser-15). An N6-acetyllysine; alternate mark is found at Lys-16, Lys-17, Lys-21, and Lys-24. Lys-16, Lys-17, Lys-21, and Lys-24 each carry N6-crotonyllysine; alternate. An N6-lactoyllysine; alternate mark is found at Lys-16, Lys-17, Lys-21, and Lys-24. Residues Lys-17 and Lys-21 each carry the N6-(beta-hydroxybutyryl)lysine; alternate modification. Lys-17 carries the post-translational modification N6-glutaryllysine; alternate. N6-(2-hydroxyisobutyryl)lysine; alternate is present on residues Lys-21 and Lys-24. The residue at position 21 (Lys-21) is an N6-butyryllysine; alternate. Lys-21 participates in a covalent cross-link: Glycyl lysine isopeptide (Lys-Gly) (interchain with G-Cter in SUMO2); alternate. N6-(2-hydroxyisobutyryl)lysine is present on Lys-25. An N6-(2-hydroxyisobutyryl)lysine; alternate modification is found at Lys-35. Lys-35 carries the N6-(beta-hydroxybutyryl)lysine; alternate modification. An N6-crotonyllysine; alternate modification is found at Lys-35. Residue Lys-35 is modified to N6-glutaryllysine; alternate. Lys-35 is subject to N6-succinyllysine; alternate. Lys-35 is covalently cross-linked (Glycyl lysine isopeptide (Lys-Gly) (interchain with G-Cter in ubiquitin); alternate). Glu-36 carries the polyADP-ribosyl glutamic acid modification. Ser-37 carries the phosphoserine; by AMPK modification. N6-(2-hydroxyisobutyryl)lysine; alternate is present on residues Lys-44, Lys-47, and Lys-58. An N6-lactoyllysine; alternate modification is found at Lys-44. Lys-44 and Lys-47 each carry N6-glutaryllysine; alternate. Lys-47 carries the N6-methyllysine; alternate modification. N6,N6-dimethyllysine; alternate is present on Lys-58. At Arg-80 the chain carries Dimethylated arginine. Lys-86 is subject to N6-(2-hydroxyisobutyryl)lysine; alternate. An N6-(beta-hydroxybutyryl)lysine; alternate modification is found at Lys-86. Lys-86 carries the post-translational modification N6-acetyllysine; alternate. Lys-86 carries the N6-lactoyllysine; alternate modification. Lys-86 is modified (N6,N6,N6-trimethyllysine; alternate). 2 positions are modified to omega-N-methylarginine: Arg-87 and Arg-93. Lys-109 carries the N6-(2-hydroxyisobutyryl)lysine; alternate modification. Lys-109 carries the post-translational modification N6-lactoyllysine; alternate. Lys-109 carries the post-translational modification N6-glutaryllysine; alternate. Lys-109 bears the N6-methyllysine; alternate mark. O-linked (GlcNAc) serine glycosylation occurs at Ser-113. Thr-116 is modified (phosphothreonine). 2 positions are modified to N6-(2-hydroxyisobutyryl)lysine; alternate: Lys-117 and Lys-121. N6-(beta-hydroxybutyryl)lysine; alternate occurs at positions 117 and 121. An N6-lactoyllysine; alternate mark is found at Lys-117 and Lys-121. N6-glutaryllysine; alternate is present on residues Lys-117 and Lys-121. Lys-117 and Lys-121 each carry N6-succinyllysine; alternate. Residue Lys-117 is modified to N6-malonyllysine; alternate. An N6-methylated lysine; alternate modification is found at Lys-117. Lys-121 participates in a covalent cross-link: Glycyl lysine isopeptide (Lys-Gly) (interchain with G-Cter in ubiquitin); alternate.

Belongs to the histone H2B family. In terms of assembly, the nucleosome is a histone octamer containing two molecules each of H2A, H2B, H3 and H4 assembled in one H3-H4 heterotetramer and two H2A-H2B heterodimers. The octamer wraps approximately 147 bp of DNA. Post-translationally, monoubiquitination at Lys-35 (H2BK34Ub) by the MSL1/MSL2 dimer is required for histone H3 'Lys-4' (H3K4me) and 'Lys-79' (H3K79me) methylation and transcription activation at specific gene loci, such as HOXA9 and MEIS1 loci. Similarly, monoubiquitination at Lys-121 (H2BK120Ub) by the RNF20/40 complex gives a specific tag for epigenetic transcriptional activation and is also prerequisite for histone H3 'Lys-4' and 'Lys-79' methylation. It also functions cooperatively with the FACT dimer to stimulate elongation by RNA polymerase II. H2BK120Ub also acts as a regulator of mRNA splicing: deubiquitination by USP49 is required for efficient cotranscriptional splicing of a large set of exons. In terms of processing, phosphorylation at Ser-37 (H2BS36ph) by AMPK in response to stress promotes transcription. Phosphorylated on Ser-15 (H2BS14ph) by STK4/MST1 during apoptosis; which facilitates apoptotic chromatin condensation. Also phosphorylated on Ser-15 in response to DNA double strand breaks (DSBs), and in correlation with somatic hypermutation and immunoglobulin class-switch recombination. GlcNAcylation at Ser-113 promotes monoubiquitination of Lys-121. It fluctuates in response to extracellular glucose, and associates with transcribed genes. Post-translationally, ADP-ribosylated by PARP1 or PARP2 on Ser-7 (H2BS6ADPr) in response to DNA damage. H2BS6ADPr promotes recruitment of CHD1L. Mono-ADP-ribosylated on Glu-3 (H2BE2ADPr) by PARP3 in response to single-strand breaks. Poly ADP-ribosylation on Glu-36 (H2BE35ADPr) by PARP1 regulates adipogenesis: it inhibits phosphorylation at Ser-37 (H2BS36ph), thereby blocking expression of pro-adipogenetic genes. In terms of processing, crotonylation (Kcr) is specifically present in male germ cells and marks testis-specific genes in post-meiotic cells, including X-linked genes that escape sex chromosome inactivation in haploid cells. Crotonylation marks active promoters and enhancers and confers resistance to transcriptional repressors. It is also associated with post-meiotically activated genes on autosomes. Lactylated in macrophages by EP300/P300 by using lactoyl-CoA directly derived from endogenous or exogenous lactate, leading to stimulates gene transcription.

Its subcellular location is the nucleus. The protein localises to the chromosome. Its function is as follows. Core component of nucleosome. Nucleosomes wrap and compact DNA into chromatin, limiting DNA accessibility to the cellular machineries which require DNA as a template. Histones thereby play a central role in transcription regulation, DNA repair, DNA replication and chromosomal stability. DNA accessibility is regulated via a complex set of post-translational modifications of histones, also called histone code, and nucleosome remodeling. This Homo sapiens (Human) protein is Histone H2B type 1-D.